We begin with the raw amino-acid sequence, 708 residues long: C-Jun-amino-terminal kinase-interacting protein 1 (708 aa).

The segment at 1–26 is disordered; that stretch reads MAERESGLSGGAASPPAASPFLGLHI. Low complexity predominate over residues 11-24; it reads GAASPPAASPFLGL. Phosphoserine occurs at positions 14, 28, and 39. The tract at residues 69–368 is disordered; it reads PPRAGLLSAG…PPRASLSSDT (300 aa). Positions 71 to 87 are enriched in low complexity; the sequence is RAGLLSAGSSGSAGSRL. Thr103 is modified (phosphothreonine; by MAPK8, MAPK9 and MAPK10). Acidic residues predominate over residues 105 to 116; the sequence is GAEDDEEDDDEL. The segment at 126–282 is JNK-binding domain (JBD); sequence SKAESGQEPA…EATEEIYLTP (157 aa). A Phosphoserine modification is found at Ser149. Residues 154 to 173 form a minimal inhibitory domain (MID) region; that stretch reads RPKRPTTLNLFPQVPRSQDT. The segment covering 159–179 has biased composition (polar residues); it reads TTLNLFPQVPRSQDTLNNNSL. Ser178, Ser184, Ser190, Ser192, and Ser193 each carry phosphoserine. Polar residues predominate over residues 191 to 201; the sequence is RSSSPLKTGEQ. Position 202 is a phosphothreonine; by MAPK8, MAPK9 and MAPK10 (Thr202). The residue at position 211 (Ser211) is a Phosphoserine. Over residues 220-232 the composition is skewed to polar residues; the sequence is PVPTQDRGTSTDS. Over residues 264–274 the composition is skewed to basic and acidic residues; it reads IHYQADVRLEA. Positions 280-468 are interaction with MAP3K7; sequence LTPVQRPPDP…NVFMSGRSRS (189 aa). The span at 292 to 308 shows a compositional bias: polar residues; that stretch reads PTSTFLPPTESRMSVSS. A phosphoserine mark is found at Ser308, Ser325, Ser327, Ser337, Ser352, Ser363, Ser366, Ser404, and Ser406. 2 consecutive short sequence motifs (D-box) follow at residues 350–357 and 361–369; these read RGSLGEPP and RASLSSDTS. Thr408 carries the post-translational modification Phosphothreonine. The interval 426-448 is disordered; that stretch reads EEYEEAPQPRPPTCLSEDSTPDE. Phosphoserine occurs at positions 441 and 444. Thr445 carries the phosphothreonine modification. Residues Ser466, Ser468, Ser469, and Ser470 each carry the phosphoserine modification. Residues 468–657 are interaction with VRK2; the sequence is SSSAESFGLF…PKNNKYFGFI (190 aa). Positions 485 to 546 constitute an SH3 domain; it reads EHEQTHRAIF…PAYYAIEVTK (62 aa). Positions 558–697 constitute a PID domain; the sequence is SDWIDQFRVK…FQQFYKQFVE (140 aa).

It belongs to the JIP scaffold family. As to quaternary structure, forms homo- or heterooligomeric complexes. Binds specific components of the JNK signaling pathway namely MAPK8/JNK1, MAPK9/JNK2, MAPK10/JNK3, MAP2K7/MKK7, MAP3K11/MLK3 and DLK1. Also binds the proline-rich domain-containing splice variant of apolipoprotein E receptor 2 (ApoER2). Interacts, via the PID domain, with ARHGEF28. Binds the cytoplasmic tails of LRP1 and LRP2 (Megalin). Binds the TPR motif-containing C-terminal of kinesin light chain, KLC1. Pre-assembled MAPK8IP1 scaffolding complexes are then transported as a cargo of kinesin, to the required subcellular location. Interacts with the cytoplasmic domain of APP. Interacts with DCLK2, VRK2 and MAP3K7/TAK1. Found in a complex with SH3RF1, RAC1, MAP3K11/MLK3, MAP2K7/MKK7 and MAPK8/JNK1. Found in a complex with SH3RF1, RAC2, MAP3K7/TAK1, MAP2K7/MKK7, MAPK8/JNK1 and MAPK9/JNK2. Interacts with SH3RF2. Post-translationally, phosphorylated by MAPK8, MAPK9 and MAPK10. Phosphorylation on Thr-103 is also necessary for the dissociation and activation of MAP3K12. Phosphorylated by VRK2. Hyperphosphorylated during mitosis following activation of stress-activated and MAP kinases. In terms of processing, ubiquitinated. Two preliminary events are required to prime for ubiquitination; phosphorylation and an increased in intracellular calcium concentration. Then, the calcium influx initiates ubiquitination and degradation by the ubiquitin-proteasome pathway. Highly expressed in brain and pancreatic beta-cells. Weaker expression found in kidney.

The protein resides in the cytoplasm. Its subcellular location is the perinuclear region. It localises to the nucleus. It is found in the endoplasmic reticulum membrane. The protein localises to the mitochondrion membrane. Functionally, the JNK-interacting protein (JIP) group of scaffold proteins selectively mediates JNK signaling by aggregating specific components of the MAPK cascade to form a functional JNK signaling module. Required for JNK activation in response to excitotoxic stress. Cytoplasmic MAPK8IP1 causes inhibition of JNK-regulated activity by retaining JNK in the cytoplasm and thus inhibiting the JNK phosphorylation of c-Jun. May also participate in ApoER2-specific reelin signaling. Directly, or indirectly, regulates GLUT2 gene expression and beta-cell function. Appears to have a role in cell signaling in mature and developing nerve terminals. May function as a regulator of vesicle transport, through interactions with the JNK-signaling components and motor proteins. Functions as an anti-apoptotic protein and whose level seems to influence the beta-cell death or survival response. Acts as a scaffold protein that coordinates with SH3RF1 in organizing different components of the JNK pathway, including RAC1 or RAC2, MAP3K11/MLK3 or MAP3K7/TAK1, MAP2K7/MKK7, MAPK8/JNK1 and/or MAPK9/JNK2 into a functional multiprotein complex to ensure the effective activation of the JNK signaling pathway. Regulates the activation of MAPK8/JNK1 and differentiation of CD8(+) T-cells. The chain is C-Jun-amino-terminal kinase-interacting protein 1 (Mapk8ip1) from Rattus norvegicus (Rat).